Reading from the N-terminus, the 381-residue chain is L-lactate dehydrogenase (381 aa).

The region spanning 1–380 (MIISASTDYR…SADSLVRELG (380 aa)) is the FMN hydroxy acid dehydrogenase domain. A substrate-binding site is contributed by Y24. S106 and Q127 together coordinate FMN. A substrate-binding site is contributed by Y129. T155 is an FMN binding site. R164 is a binding site for substrate. Residue K251 coordinates FMN. H275 acts as the Proton acceptor in catalysis. R278 is a substrate binding site. Residue 306 to 330 (DSGIRTGLDVVRMIALGADSVLLGR) coordinates FMN.

This sequence belongs to the FMN-dependent alpha-hydroxy acid dehydrogenase family. Homotetramer. Requires FMN as cofactor.

The protein resides in the cell inner membrane. The catalysed reaction is (S)-lactate + A = pyruvate + AH2. In terms of biological role, catalyzes the conversion of L-lactate to pyruvate. Is coupled to the respiratory chain. The protein is L-lactate dehydrogenase of Pseudomonas aeruginosa (strain UCBPP-PA14).